Here is a 352-residue protein sequence, read N- to C-terminus: Ion-translocating oxidoreductase complex subunit D (352 aa).

Helical transmembrane passes span 20–40 (IMLL…WFFG), 42–62 (GTLV…ALVL), 78–109 (ALLT…VIIA), 123–143 (PAMI…TSWL), and 148–168 (IAVN…GHTA). Thr187 carries the FMN phosphoryl threonine modification. Transmembrane regions (helical) follow at residues 214–234 (ILAG…GVWL), 242–262 (WHIP…GWLF), 267–287 (LAAP…FFIL), 301–321 (LIFG…GGYP), and 322–342 (DGVA…DYYT).

Belongs to the NqrB/RnfD family. The complex is composed of six subunits: RsxA, RsxB, RsxC, RsxD, RsxE and RsxG. FMN serves as cofactor.

Its subcellular location is the cell inner membrane. In terms of biological role, part of a membrane-bound complex that couples electron transfer with translocation of ions across the membrane. Required to maintain the reduced state of SoxR. The sequence is that of Ion-translocating oxidoreductase complex subunit D from Escherichia coli O6:K15:H31 (strain 536 / UPEC).